We begin with the raw amino-acid sequence, 150 residues long: Large ribosomal subunit protein bL9 (150 aa).

The protein belongs to the bacterial ribosomal protein bL9 family.

Functionally, binds to the 23S rRNA. The sequence is that of Large ribosomal subunit protein bL9 from Shewanella woodyi (strain ATCC 51908 / MS32).